The following is a 261-amino-acid chain: Transmembrane protein 106A (261 aa).

Residues 1-10 (MGKAFSQLTS) are compositionally biased toward polar residues. A disordered region spans residues 1-22 (MGKAFSQLTSQKDEDKSILPDN). Residues 93–113 (LSVFLAVTICLLIFSLTIFFL) form a helical membrane-spanning segment.

Belongs to the TMEM106 family.

It localises to the cell membrane. Functionally, activates macrophages and polarizes them into M1-like macrophages through the activation of the MAPK and NF-kappaB signaling pathway. Upon activation, up-regulates the expression of CD80, CD86, CD69 and MHC II on macrophages, and induces the release of pro-inflammatory cytokines such as TNF, IL1B, IL6, CCL2 and nitric oxide. May play a role in inhibition of proliferation and migration. The polypeptide is Transmembrane protein 106A (Tmem106a) (Rattus norvegicus (Rat)).